A 605-amino-acid polypeptide reads, in one-letter code: Mini-chromosome maintenance complex-binding protein (605 aa).

A phosphoserine mark is found at Ser-147 and Ser-150.

Belongs to the MCMBP family. Interacts with the MCM complex.

The protein localises to the nucleus. Its function is as follows. Associated component of the MCM complex that acts as a regulator of DNA replication. Binds to the MCM complex during late S phase and may act by promoting the disassembly of the MCM complex from chromatin. The protein is Mini-chromosome maintenance complex-binding protein of Drosophila melanogaster (Fruit fly).